The following is a 491-amino-acid chain: Putative ABC transporter ATP-binding protein TDE_0906 (491 aa).

2 consecutive ABC transporter domains span residues 2–241 (INLN…KQGL) and 267–491 (LTLH…KERL). ATP contacts are provided by residues 36–43 (GKSGCGKT) and 300–307 (GKNGCGKT).

This sequence belongs to the ABC transporter superfamily.

The protein localises to the cell inner membrane. Its function is as follows. Probably part of an ABC transporter complex. Responsible for energy coupling to the transport system. In Treponema denticola (strain ATCC 35405 / DSM 14222 / CIP 103919 / JCM 8153 / KCTC 15104), this protein is Putative ABC transporter ATP-binding protein TDE_0906.